We begin with the raw amino-acid sequence, 329 residues long: Fructose-1,6-bisphosphatase class 1 (329 aa).

Residues E84, D103, L105, and D106 each coordinate Mg(2+). Residues 106 to 109, N196, and K262 contribute to the substrate site; that span reads DGSS. E268 lines the Mg(2+) pocket.

Belongs to the FBPase class 1 family. In terms of assembly, homotetramer. Mg(2+) is required as a cofactor.

The protein resides in the cytoplasm. It carries out the reaction beta-D-fructose 1,6-bisphosphate + H2O = beta-D-fructose 6-phosphate + phosphate. It participates in carbohydrate biosynthesis; gluconeogenesis. This is Fructose-1,6-bisphosphatase class 1 from Shewanella halifaxensis (strain HAW-EB4).